A 261-amino-acid chain; its full sequence is 4-phosphopantoate--beta-alanine ligase (261 aa).

Residues Arg17, Arg39, 181–182, 187–188, and 199–200 contribute to the ATP site; these read DL, RS, and NI.

The protein belongs to the archaeal phosphopantothenate synthetase family. In terms of assembly, homodimer.

It carries out the reaction (R)-4-phosphopantoate + beta-alanine + ATP = (R)-4'-phosphopantothenate + AMP + diphosphate + H(+). It functions in the pathway cofactor biosynthesis; coenzyme A biosynthesis. Its function is as follows. Catalyzes the condensation of (R)-4-phosphopantoate and beta-alanine to 4'-phosphopantothenate in the CoA biosynthesis pathway. This Thermococcus onnurineus (strain NA1) protein is 4-phosphopantoate--beta-alanine ligase.